The sequence spans 121 residues: Holo-[acyl-carrier-protein] synthase (121 aa).

The Mg(2+) site is built by aspartate 8 and glutamate 58.

It belongs to the P-Pant transferase superfamily. AcpS family. Mg(2+) is required as a cofactor.

Its subcellular location is the cytoplasm. It catalyses the reaction apo-[ACP] + CoA = holo-[ACP] + adenosine 3',5'-bisphosphate + H(+). In terms of biological role, transfers the 4'-phosphopantetheine moiety from coenzyme A to a Ser of acyl-carrier-protein. This Bacillus velezensis (strain DSM 23117 / BGSC 10A6 / LMG 26770 / FZB42) (Bacillus amyloliquefaciens subsp. plantarum) protein is Holo-[acyl-carrier-protein] synthase.